The sequence spans 365 residues: Chorismate synthase (365 aa).

Positions 48 and 54 each coordinate NADP(+). FMN-binding positions include 125-127 (RSS), 237-238 (NA), glycine 277, 292-296 (KPTSS), and arginine 318.

Belongs to the chorismate synthase family. As to quaternary structure, homotetramer. Requires FMNH2 as cofactor.

It carries out the reaction 5-O-(1-carboxyvinyl)-3-phosphoshikimate = chorismate + phosphate. It functions in the pathway metabolic intermediate biosynthesis; chorismate biosynthesis; chorismate from D-erythrose 4-phosphate and phosphoenolpyruvate: step 7/7. Its function is as follows. Catalyzes the anti-1,4-elimination of the C-3 phosphate and the C-6 proR hydrogen from 5-enolpyruvylshikimate-3-phosphate (EPSP) to yield chorismate, which is the branch point compound that serves as the starting substrate for the three terminal pathways of aromatic amino acid biosynthesis. This reaction introduces a second double bond into the aromatic ring system. The protein is Chorismate synthase of Paracidovorax citrulli (strain AAC00-1) (Acidovorax citrulli).